A 255-amino-acid chain; its full sequence is 5-oxoprolinase subunit A (255 aa).

This sequence belongs to the LamB/PxpA family. In terms of assembly, forms a complex composed of PxpA, PxpB and PxpC.

The enzyme catalyses 5-oxo-L-proline + ATP + 2 H2O = L-glutamate + ADP + phosphate + H(+). Catalyzes the cleavage of 5-oxoproline to form L-glutamate coupled to the hydrolysis of ATP to ADP and inorganic phosphate. The polypeptide is 5-oxoprolinase subunit A (Campylobacter jejuni subsp. doylei (strain ATCC BAA-1458 / RM4099 / 269.97)).